We begin with the raw amino-acid sequence, 396 residues long: Elongation factor Tu 1 (396 aa).

In terms of domain architecture, tr-type G spans 10–206; that stretch reads KPHCNIGTIG…TVDDYIPQPD (197 aa). The interval 19 to 26 is G1; sequence GHVDHGKT. Residue 19-26 participates in GTP binding; it reads GHVDHGKT. Threonine 26 lines the Mg(2+) pocket. Residues 60-64 form a G2 region; it reads GITIN. The G3 stretch occupies residues 81–84; that stretch reads DCPG. GTP contacts are provided by residues 81–85 and 136–139; these read DCPGH and NKVD. The G4 stretch occupies residues 136–139; sequence NKVD. The G5 stretch occupies residues 174–176; the sequence is SAK.

It belongs to the TRAFAC class translation factor GTPase superfamily. Classic translation factor GTPase family. EF-Tu/EF-1A subfamily. As to quaternary structure, monomer.

It localises to the cytoplasm. The enzyme catalyses GTP + H2O = GDP + phosphate + H(+). GTP hydrolase that promotes the GTP-dependent binding of aminoacyl-tRNA to the A-site of ribosomes during protein biosynthesis. The protein is Elongation factor Tu 1 of Caulobacter sp. (strain K31).